Reading from the N-terminus, the 197-residue chain is Phosphoheptose isomerase (197 aa).

The 161-residue stretch at 37-197 (MLQCLMNDGK…CIDSVLLEGM (161 aa)) folds into the SIS domain. 52 to 54 (NGG) is a binding site for substrate. Zn(2+)-binding residues include histidine 61 and glutamate 65. Substrate-binding positions include glutamate 65, 94 to 95 (ND), 120 to 122 (STS), serine 125, and glutamine 175. Positions 175 and 183 each coordinate Zn(2+).

The protein belongs to the SIS family. GmhA subfamily. Homotetramer. It depends on Zn(2+) as a cofactor.

The protein localises to the cytoplasm. It carries out the reaction 2 D-sedoheptulose 7-phosphate = D-glycero-alpha-D-manno-heptose 7-phosphate + D-glycero-beta-D-manno-heptose 7-phosphate. Its pathway is carbohydrate biosynthesis; D-glycero-D-manno-heptose 7-phosphate biosynthesis; D-glycero-alpha-D-manno-heptose 7-phosphate and D-glycero-beta-D-manno-heptose 7-phosphate from sedoheptulose 7-phosphate: step 1/1. Its function is as follows. Catalyzes the isomerization of sedoheptulose 7-phosphate in D-glycero-D-manno-heptose 7-phosphate. The sequence is that of Phosphoheptose isomerase from Neisseria gonorrhoeae (strain ATCC 700825 / FA 1090).